A 262-amino-acid polypeptide reads, in one-letter code: Ribosome-recycling factor, mitochondrial (262 aa).

The N-terminal 55 residues, 1–55, are a transit peptide targeting the mitochondrion; it reads MASGIRCFRLLHPAFRSYHAALTRPVSEVSMKTVSGRQHGHRQYSAYPAVPVRHF.

The protein belongs to the RRF family.

The protein localises to the mitochondrion. In terms of biological role, responsible for the disassembly of ribosomes from messenger RNA at the termination of mitochondrial protein biosynthesis. Acts in collaboration with GFM2. Promotes mitochondrial ribosome recycling by dissolution of intersubunit contacts. In Mus musculus (Mouse), this protein is Ribosome-recycling factor, mitochondrial (Mrrf).